A 175-amino-acid chain; its full sequence is Bifunctional protein PyrR (175 aa).

A PRPP-binding motif is present at residues 97 to 109; that stretch reads IVLIDDVLFTGRT.

This sequence belongs to the purine/pyrimidine phosphoribosyltransferase family. PyrR subfamily. Homodimer and homohexamer; in equilibrium.

The catalysed reaction is UMP + diphosphate = 5-phospho-alpha-D-ribose 1-diphosphate + uracil. In terms of biological role, regulates transcriptional attenuation of the pyrimidine nucleotide (pyr) operon by binding in a uridine-dependent manner to specific sites on pyr mRNA. This disrupts an antiterminator hairpin in the RNA and favors formation of a downstream transcription terminator, leading to a reduced expression of downstream genes. Functionally, also displays a weak uracil phosphoribosyltransferase activity which is not physiologically significant. This chain is Bifunctional protein PyrR, found in Leuconostoc citreum (strain KM20).